The chain runs to 530 residues: Histone-arginine methyltransferase CARMER (530 aa).

Residues Ala-141 to His-450 enclose the SAM-dependent MTase PRMT-type domain. Gln-154, Arg-163, Gly-187, Glu-209, Glu-238, and Thr-266 together coordinate S-adenosyl-L-methionine. An Asymmetric dimethylarginine; by autocatalysis modification is found at Arg-501.

This sequence belongs to the class I-like SAM-binding methyltransferase superfamily. Protein arginine N-methyltransferase family. Homodimer. The dimethylated protein is the major form.

The protein resides in the cytoplasm. It is found in the nucleus. The catalysed reaction is L-arginyl-[protein] + 2 S-adenosyl-L-methionine = N(omega),N(omega)-dimethyl-L-arginyl-[protein] + 2 S-adenosyl-L-homocysteine + 2 H(+). Its function is as follows. Methylates (mono- and asymmetric dimethylation) the guanidino nitrogens of arginyl residues in proteins. May methylate histone H3 at 'Arg-17' and activate transcription via chromatin remodeling. The chain is Histone-arginine methyltransferase CARMER (Art4) from Drosophila erecta (Fruit fly).